The chain runs to 633 residues: Chitin synthase regulatory factor 4 (633 aa).

The interval 121-151 is disordered; sequence ATSSQETKRDRPLPNIRNSAPSATRSHSTPC. Positions 136-149 are enriched in polar residues; it reads IRNSAPSATRSHST. Phosphoserine is present on S148. Sel1-like repeat units follow at residues 278 to 314, 315 to 346, 438 to 474, 475 to 511, and 512 to 543; these read AKAM…NLGY, TRSL…SEND, SSAQ…KRGE, TEAD…MAGN, and ANAQ…KAGH. The tract at residues 583 to 613 is disordered; the sequence is ASETSPPHAPAVSSTPVTSAPPVSQTKVTKV. Over residues 592–613 the composition is skewed to low complexity; that stretch reads PAVSSTPVTSAPPVSQTKVTKV.

The protein localises to the cytoplasm. Its function is as follows. Involved in septum formation. Required for the proper localization of chs2 at the septum. This is Chitin synthase regulatory factor 4 (chr4) from Schizosaccharomyces pombe (strain 972 / ATCC 24843) (Fission yeast).